The primary structure comprises 280 residues: Tryptophan synthase alpha chain (280 aa).

Residues E49 and D60 each act as proton acceptor in the active site.

The protein belongs to the TrpA family. In terms of assembly, tetramer of two alpha and two beta chains.

The catalysed reaction is (1S,2R)-1-C-(indol-3-yl)glycerol 3-phosphate + L-serine = D-glyceraldehyde 3-phosphate + L-tryptophan + H2O. It participates in amino-acid biosynthesis; L-tryptophan biosynthesis; L-tryptophan from chorismate: step 5/5. The alpha subunit is responsible for the aldol cleavage of indoleglycerol phosphate to indole and glyceraldehyde 3-phosphate. This chain is Tryptophan synthase alpha chain, found in Corynebacterium efficiens (strain DSM 44549 / YS-314 / AJ 12310 / JCM 11189 / NBRC 100395).